A 139-amino-acid polypeptide reads, in one-letter code: D-ribose pyranase (139 aa).

His-20 functions as the Proton donor in the catalytic mechanism. Substrate is bound by residues Asp-28, His-106, and Tyr-128–Asn-130.

This sequence belongs to the RbsD / FucU family. RbsD subfamily. As to quaternary structure, homodecamer.

The protein resides in the cytoplasm. The enzyme catalyses beta-D-ribopyranose = beta-D-ribofuranose. The protein operates within carbohydrate metabolism; D-ribose degradation; D-ribose 5-phosphate from beta-D-ribopyranose: step 1/2. In terms of biological role, catalyzes the interconversion of beta-pyran and beta-furan forms of D-ribose. The sequence is that of D-ribose pyranase from Proteus mirabilis (strain HI4320).